A 194-amino-acid chain; its full sequence is Imidazoleglycerol-phosphate dehydratase (194 aa).

The protein belongs to the imidazoleglycerol-phosphate dehydratase family.

It is found in the cytoplasm. It catalyses the reaction D-erythro-1-(imidazol-4-yl)glycerol 3-phosphate = 3-(imidazol-4-yl)-2-oxopropyl phosphate + H2O. The protein operates within amino-acid biosynthesis; L-histidine biosynthesis; L-histidine from 5-phospho-alpha-D-ribose 1-diphosphate: step 6/9. This chain is Imidazoleglycerol-phosphate dehydratase, found in Caldicellulosiruptor bescii (strain ATCC BAA-1888 / DSM 6725 / KCTC 15123 / Z-1320) (Anaerocellum thermophilum).